The chain runs to 170 residues: Cathelicidin antimicrobial peptide (170 aa).

A signal peptide spans 1–30 (MKTQRDSPSLGRWSLVLLLLGLVMPLAIVA). A propeptide spans 31–131 (QVLSYQEAVL…DISCDKDNRR (101 aa)) (cathelin-like domain (CLD)). 2 disulfide bridges follow: cysteine 86–cysteine 97 and cysteine 108–cysteine 125. The tract at residues 150 to 162 (LKKVGQKIKDFLG) is active core.

The protein belongs to the cathelicidin family. As to quaternary structure, monomer, homodimer or homotrimer (in vitro). Oligomerizes as tetra- or hexamer in solution (in vitro). In terms of processing, proteolytically cleaved by proteinase PRTN3 into antibacterial peptide LL-37. Proteolytically cleaved by cathepsin CTSG and neutrophil elastase ELANE. Resistant to proteolytic degradation in solution, and when bound to both zwitterionic (mimicking mammalian membranes) and negatively charged membranes (mimicking bacterial membranes). Post-translationally, after secretion onto the skin surface, the CAMP gene product is processed by a serine protease-dependent mechanism into multiple novel antimicrobial peptides distinct from and shorter than cathelicidin LL-37. These peptides show enhanced antimicrobial action, acquiring the ability to kill skin pathogens such as S.aureus, E.coli and C.albicans. These peptides have lost the ability to stimulate CXCL8/IL8 release from keratinocytes. The peptides act synergistically, killing bacteria at lower concentrations when present together, and maintain activity at increased salt condition.

Its subcellular location is the secreted. The protein resides in the vesicle. In terms of biological role, antimicrobial protein that is an integral component of the innate immune system. Binds to bacterial lipopolysaccharides (LPS). Acts via neutrophil N-formyl peptide receptors to enhance the release of CXCL2. Postsecretory processing generates multiple cathelicidin antimicrobial peptides with various lengths which act as a topical antimicrobial defense in sweat on skin. The unprocessed precursor form, cathelicidin antimicrobial peptide, inhibits the growth of Gram-negative E.coli and E.aerogenes with efficiencies comparable to that of the mature peptide LL-37 (in vitro). Antimicrobial peptide that is an integral component of the innate immune system. Binds to bacterial lipopolysaccharides (LPS). Causes membrane permeabilization by forming transmembrane pores (in vitro). Causes lysis of E.coli. Exhibits antimicrobial activity against Gram-negative bacteria such as P.aeruginosa, S.typhimurium, E.aerogenes, E.coli and P.syringae, Gram-positive bacteria such as L.monocytogenes, S.epidermidis, S.pyogenes and S.aureus, as well as vancomycin-resistant enterococci (in vitro). Exhibits antimicrobial activity against methicillin-resistant S.aureus, P.mirabilis, and C.albicans in low-salt media, but not in media containing 100 mM NaCl (in vitro). Forms chiral supramolecular assemblies with quinolone signal (PQS) molecules of P.aeruginosa, which may lead to interference of bacterial quorum signaling and perturbance of bacterial biofilm formation. May form supramolecular fiber-like assemblies on bacterial membranes. Induces cytokine and chemokine producation as well as TNF/TNFA and CSF2/GMCSF production in normal human keratinocytes. Exhibits hemolytic activity against red blood cells. Functionally, exhibits antimicrobial activity against E.coli and B.megaterium (in vitro). This chain is Cathelicidin antimicrobial peptide, found in Macaca fascicularis (Crab-eating macaque).